We begin with the raw amino-acid sequence, 287 residues long: Energy-coupling factor transporter ATP-binding protein EcfA1 (287 aa).

The ABC transporter domain maps to 6 to 248; that stretch reads IVAEGVSYAY…ADRIRALRLD (243 aa). Residue 47–54 participates in ATP binding; that stretch reads GMNGSGKS.

This sequence belongs to the ABC transporter superfamily. Energy-coupling factor EcfA family. In terms of assembly, forms a stable energy-coupling factor (ECF) transporter complex composed of 2 membrane-embedded substrate-binding proteins (S component), 2 ATP-binding proteins (A component) and 2 transmembrane proteins (T component).

It localises to the cell membrane. Functionally, ATP-binding (A) component of a common energy-coupling factor (ECF) ABC-transporter complex. Unlike classic ABC transporters this ECF transporter provides the energy necessary to transport a number of different substrates. The sequence is that of Energy-coupling factor transporter ATP-binding protein EcfA1 from Symbiobacterium thermophilum (strain DSM 24528 / JCM 14929 / IAM 14863 / T).